The chain runs to 132 residues: Agouti-signaling protein (132 aa).

The first 22 residues, 1-22 (MDVTRLLLATLLVFLCFFTAYS), serve as a signal peptide directing secretion. N39 carries N-linked (GlcNAc...) asparagine glycosylation. The disordered stretch occupies residues 60–88 (KQISRKEAEKKRSSKKEASMKKVARPRTP). The segment covering 63 to 79 (SRKEAEKKRSSKKEASM) has biased composition (basic and acidic residues). Disulfide bonds link C93–C108, C100–C114, C107–C125, C111–C132, and C116–C123. Residues 93-132 (CVATRDSCKPPAPACCDPCASCQCRFFRSACSCRVLSLNC) enclose the Agouti domain.

It localises to the secreted. Involved in the regulation of melanogenesis. The binding of ASP to MC1R precludes alpha-MSH initiated signaling and thus blocks production of cAMP, leading to a down-regulation of eumelanogenesis (brown/black pigment) and thus increasing synthesis of pheomelanin (yellow/red pigment). This Macaca cyclopis (Taiwan macaque) protein is Agouti-signaling protein (ASIP).